The following is a 99-amino-acid chain: Nucleoid-associated protein MGAS2096_Spy1605 (99 aa).

This sequence belongs to the YbaB/EbfC family. As to quaternary structure, homodimer.

Its subcellular location is the cytoplasm. The protein localises to the nucleoid. Binds to DNA and alters its conformation. May be involved in regulation of gene expression, nucleoid organization and DNA protection. The polypeptide is Nucleoid-associated protein MGAS2096_Spy1605 (Streptococcus pyogenes serotype M12 (strain MGAS2096)).